Reading from the N-terminus, the 180-residue chain is ATP synthase subunit delta (180 aa).

It belongs to the ATPase delta chain family. F-type ATPases have 2 components, F(1) - the catalytic core - and F(0) - the membrane proton channel. F(1) has five subunits: alpha(3), beta(3), gamma(1), delta(1), epsilon(1). F(0) has three main subunits: a(1), b(2) and c(10-14). The alpha and beta chains form an alternating ring which encloses part of the gamma chain. F(1) is attached to F(0) by a central stalk formed by the gamma and epsilon chains, while a peripheral stalk is formed by the delta and b chains.

It localises to the cell inner membrane. Functionally, f(1)F(0) ATP synthase produces ATP from ADP in the presence of a proton or sodium gradient. F-type ATPases consist of two structural domains, F(1) containing the extramembraneous catalytic core and F(0) containing the membrane proton channel, linked together by a central stalk and a peripheral stalk. During catalysis, ATP synthesis in the catalytic domain of F(1) is coupled via a rotary mechanism of the central stalk subunits to proton translocation. In terms of biological role, this protein is part of the stalk that links CF(0) to CF(1). It either transmits conformational changes from CF(0) to CF(1) or is implicated in proton conduction. In Chlorobium phaeobacteroides (strain BS1), this protein is ATP synthase subunit delta.